Here is a 141-residue protein sequence, read N- to C-terminus: Short-chain diamines transporter (141 aa).

Helical transmembrane passes span 16 to 36, 39 to 59, 76 to 96, and 103 to 123; these read VILLVIIAIALSFIFDVPLEV, TLGIVMAVTSVFWNMIFNHFF, ILHAIGFEGGLMLVTIPMVAY, and WQAIVLDFGLTMCILVYTFIF.

It belongs to the proteobacterial antimicrobial compound efflux (PACE) (TC 2.A.117) family.

Its subcellular location is the cell inner membrane. Functionally, mediates the efflux of short-chain diamines when energized by an electrochemical gradient. Involved in resistance to the synthetic biocide chlorhexidine, a widely used antiseptic and disinfectant in both hospital and community settings. Interacts directly with chlorhexidine and mediates its efflux via an energy-dependent mechanism. The protein is Short-chain diamines transporter of Acinetobacter baylyi (strain ATCC 33305 / BD413 / ADP1).